The primary structure comprises 830 residues: Pentatricopeptide repeat-containing protein At5g55740, chloroplastic (830 aa).

The N-terminal 59 residues, 1-59 (MASLPFNTIPNKVPFSVSSKPSSKHHDEQAHSPSSTSYFHRVSSLCKNGEIKEALSLVT), are a transit peptide targeting the chloroplast. The segment at 15-36 (FSVSSKPSSKHHDEQAHSPSST) is disordered. PPR repeat units follow at residues 69 to 103 (GPEIYGEILQGCVYERDLSTGKQIHARILKNGDFY), 106 to 136 (NEYIETKLVIFYAKCDALEIAEVLFSKLRVR), 137 to 171 (NVFSWAAIIGVKCRIGLCEGALMGFVEMLENEIFP), 172 to 206 (DNFVVPNVCKACGALKWSRFGRGVHGYVVKSGLED), 207 to 237 (CVFVASSLADMYGKCGVLDDASKVFDEIPDR), 238 to 272 (NAVAWNALMVGYVQNGKNEEAIRLFSDMRKQGVEP), 273 to 307 (TRVTVSTCLSASANMGGVEEGKQSHAIAIVNGMEL), 308 to 338 (DNILGTSLLNFYCKVGLIEYAEMVFDRMFEK), 339 to 373 (DVVTWNLIISGYVQQGLVEDAIYMCQLMRLEKLKY), 374 to 408 (DCVTLATLMSAAARTENLKLGKEVQCYCIRHSFES), 409 to 439 (DIVLASTVMDMYAKCGSIVDAKKVFDSTVEK), 440 to 474 (DLILWNTLLAAYAESGLSGEALRLFYGMQLEGVPP), 475 to 509 (NVITWNLIILSLLRNGQVDEAKDMFLQMQSSGIIP), 510 to 544 (NLISWTTMMNGMVQNGCSEEAILFLRKMQESGLRP), 545 to 575 (NAFSITVALSACAHLASLHIGRTIHGYIIRN), 581 to 611 (LVSIETSLVDMYAKCGDINKAEKVFGSKLYS), 612 to 646 (ELPLSNAMISAYALYGNLKEAIALYRSLEGVGLKP), 647 to 682 (DNITITNVLSACNHAGDINQAIEIFTDIVSKRSMKP), and 683 to 713 (CLEHYGLMVDLLASAGETEKALRLIEEMPFK). The tract at residues 718–793 (MIQSLVASCN…KPGCSWIQIT (76 aa)) is type E motif. The interval 796-826 (EGVHVFVANDKTHTRINEIQMMLALLLYDMG) is type E(+) motif.

Belongs to the PPR family. PCMP-E subfamily.

It localises to the plastid. The protein localises to the chloroplast. Plays a major role in chloroplast RNA editing. Acts as a site-recognition transacting factor involved in the edition of the site 2 of ndhD (ndhD-2), which encodes a subunit of the NDH complex. In Arabidopsis thaliana (Mouse-ear cress), this protein is Pentatricopeptide repeat-containing protein At5g55740, chloroplastic (CRR21).